The sequence spans 320 residues: Short-chain dehydrogenase TIC 32 A, chloroplastic (320 aa).

NADP(+)-binding positions include 40 to 46, 92 to 93, Asn119, and Thr140; these read GGTSGIG and DL. Ser174 is a substrate binding site. Catalysis depends on Tyr196, which acts as the Proton acceptor. The tract at residues 301–317 is interaction with calmodulin; sequence DTTLADKLWDFSIKLVE.

Belongs to the short-chain dehydrogenases/reductases (SDR) family. As to quaternary structure, part of the Tic complex. Expressed in the dehiscence zone of developing pods.

It localises to the plastid. The protein localises to the chloroplast inner membrane. In terms of biological role, involved in protein precursor import into chloroplasts. Maybe involved in pod abscission or dehiscence (pod shatter). The polypeptide is Short-chain dehydrogenase TIC 32 A, chloroplastic (Brassica napus (Rape)).